The sequence spans 2080 residues: Dedicator of cytokinesis protein 6 (2080 aa).

Basic and acidic residues predominate over residues 20–31; it reads EVRKQVSRERSG. Disordered regions lie at residues 20–44, 156–189, and 408–441; these read EVRKQVSRERSGSPHSSRRSSSSLG, QDTPGDERTGPEDVDDPQHCSGSPEDTPRSSGAS, and PQDRDSDSEGERRPTWAERRRRGPQDRGYSGDDA. Residues 32 to 42 are compositionally biased toward low complexity; it reads SPHSSRRSSSS. Ser-178 is subject to Phosphoserine. Basic and acidic residues predominate over residues 408–425; it reads PQDRDSDSEGERRPTWAE. Positions 546–712 constitute a C2 DOCK-type domain; that stretch reads RNLLFVYPHS…GVFSVELTAV (167 aa). Residue Arg-863 is modified to Omega-N-methylarginine. 3 positions are modified to phosphoserine: Ser-870, Ser-878, and Ser-882. The disordered stretch occupies residues 1101–1123; the sequence is ASPSPSVSSTTSQSSTFSSQAPD. The span at 1104 to 1122 shows a compositional bias: low complexity; it reads SPSVSSTTSQSSTFSSQAP. At Ser-1341 the chain carries Phosphoserine. Residues 1620-2056 form the DOCKER domain; that stretch reads RGYQGSPDLR…LQPLLTQRLP (437 aa). Thr-2064 carries the post-translational modification Phosphothreonine. Phosphoserine occurs at positions 2065 and 2069.

Belongs to the DOCK family. Widely expressed with highest levels in lung and heart.

It localises to the cytoplasm. It is found in the perinuclear region. Acts as a guanine nucleotide exchange factor (GEF) for CDC42 and RAC1 small GTPases. Through its activation of CDC42 and RAC1, regulates neurite outgrowth in an vitro differentiation system. The polypeptide is Dedicator of cytokinesis protein 6 (Dock6) (Mus musculus (Mouse)).